The following is a 143-amino-acid chain: Small ribosomal subunit protein eS12 (143 aa).

This sequence belongs to the eukaryotic ribosomal protein eS12 family. Component of the small ribosomal subunit. Mature ribosomes consist of a small (40S) and a large (60S) subunit. The 40S subunit contains about 32 different proteins and 1 molecule of RNA (18S). The 60S subunit contains 45 different proteins and 3 molecules of RNA (25S, 5.8S and 5S).

The protein localises to the cytoplasm. Component of the ribosome, a large ribonucleoprotein complex responsible for the synthesis of proteins in the cell. The small ribosomal subunit (SSU) binds messenger RNAs (mRNAs) and translates the encoded message by selecting cognate aminoacyl-transfer RNA (tRNA) molecules. The large subunit (LSU) contains the ribosomal catalytic site termed the peptidyl transferase center (PTC), which catalyzes the formation of peptide bonds, thereby polymerizing the amino acids delivered by tRNAs into a polypeptide chain. The nascent polypeptides leave the ribosome through a tunnel in the LSU and interact with protein factors that function in enzymatic processing, targeting, and the membrane insertion of nascent chains at the exit of the ribosomal tunnel. In Candida albicans (strain SC5314 / ATCC MYA-2876) (Yeast), this protein is Small ribosomal subunit protein eS12 (RPS12).